The chain runs to 568 residues: Zinc finger protein 648 (568 aa).

A compositionally biased stretch (basic and acidic residues) spans 1 to 11 (MAQVDSQDRWG). The tract at residues 1–106 (MAQVDSQDRW…MSGKASWSRD (106 aa)) is disordered. 10 consecutive C2H2-type zinc fingers follow at residues 279–301 (YACELCGKAYSHRGTLQQHRRLH), 307–329 (YQCSFCDKAYTWSSDHRKHIRTH), 335–358 (YPCPDCGKAFVRSSDLRKHQRNMH), 364–386 (FPCSECGLTFNKPLSLLRHQRTH), 392–414 (FRCPACDREFAVASRMVEHQRVH), 420–442 (FPCPTCGKCFTKSSNLSEHQTLH), 448–470 (FKCADCGVAFAQPSRLVRHQRIH), 476–498 (FPCTQCGQAFARSSTLKRHQQIH), 504–526 (FLCAECGRAFRIASELAQHIRMH), and 532–554 (YQCEDCGQAFTRSNHLQRHRAKH). Positions 548 to 568 (QRHRAKHGTCKKEPIPSSSDE) are disordered.

The protein belongs to the krueppel C2H2-type zinc-finger protein family.

It is found in the nucleus. May be involved in transcriptional regulation. The protein is Zinc finger protein 648 (ZNF648) of Homo sapiens (Human).